A 1225-amino-acid polypeptide reads, in one-letter code: Mediator of RNA polymerase II transcription subunit 13 (1225 aa).

It belongs to the Mediator complex subunit 13 family. In terms of assembly, component of the srb8-11 complex which consists of rb8, srb9(TRAP240), srb10 and srb11. The srb8-11 complex associates with the Mediator complex thereby blocking association with RNA polymerase II and leading to reduced transcriptional activation by Mediator.

The protein localises to the nucleus. Functionally, component of the srb8-11 complex. The srb8-11 complex is a regulatory module of the Mediator complex which is itself involved in regulation of basal and activated RNA polymerase II-dependent transcription. The srb8-11 complex may be involved in the transcriptional repression of a subset of genes regulated by Mediator. It may inhibit the association of the Mediator complex with RNA polymerase II to form the holoenzyme complex. This Schizosaccharomyces pombe (strain 972 / ATCC 24843) (Fission yeast) protein is Mediator of RNA polymerase II transcription subunit 13 (srb9).